A 197-amino-acid polypeptide reads, in one-letter code: Probable chorismate pyruvate-lyase (197 aa).

Substrate-binding residues include R77, L115, and E176.

The protein belongs to the UbiC family.

It localises to the cytoplasm. The enzyme catalyses chorismate = 4-hydroxybenzoate + pyruvate. Its pathway is cofactor biosynthesis; ubiquinone biosynthesis. Removes the pyruvyl group from chorismate, with concomitant aromatization of the ring, to provide 4-hydroxybenzoate (4HB) for the ubiquinone pathway. The polypeptide is Probable chorismate pyruvate-lyase (Burkholderia ambifaria (strain ATCC BAA-244 / DSM 16087 / CCUG 44356 / LMG 19182 / AMMD) (Burkholderia cepacia (strain AMMD))).